Consider the following 101-residue polypeptide: Large ribosomal subunit protein eL43 (101 aa).

Residues C40, C43, C59, and C62 each coordinate Zn(2+). The segment at 40-62 (CPSCRSLVRLERIAFGIWRCPKC) adopts a C4-type zinc-finger fold.

It belongs to the eukaryotic ribosomal protein eL43 family. Putative zinc-binding subfamily. As to quaternary structure, part of the 50S ribosomal subunit. Zn(2+) serves as cofactor.

In terms of biological role, binds to the 23S rRNA. The sequence is that of Large ribosomal subunit protein eL43 from Pyrobaculum aerophilum (strain ATCC 51768 / DSM 7523 / JCM 9630 / CIP 104966 / NBRC 100827 / IM2).